A 121-amino-acid chain; its full sequence is Large ribosomal subunit protein uL18 (121 aa).

It belongs to the universal ribosomal protein uL18 family. In terms of assembly, part of the 50S ribosomal subunit; part of the 5S rRNA/L5/L18/L25 subcomplex. Contacts the 5S and 23S rRNAs.

In terms of biological role, this is one of the proteins that bind and probably mediate the attachment of the 5S RNA into the large ribosomal subunit, where it forms part of the central protuberance. This Mesomycoplasma hyopneumoniae (strain 232) (Mycoplasma hyopneumoniae) protein is Large ribosomal subunit protein uL18.